Consider the following 449-residue polypeptide: Glucose-6-phosphate isomerase (449 aa).

E291 (proton donor) is an active-site residue. Catalysis depends on residues H312 and K426.

Belongs to the GPI family.

Its subcellular location is the cytoplasm. The catalysed reaction is alpha-D-glucose 6-phosphate = beta-D-fructose 6-phosphate. The protein operates within carbohydrate biosynthesis; gluconeogenesis. It participates in carbohydrate degradation; glycolysis; D-glyceraldehyde 3-phosphate and glycerone phosphate from D-glucose: step 2/4. Its function is as follows. Catalyzes the reversible isomerization of glucose-6-phosphate to fructose-6-phosphate. This chain is Glucose-6-phosphate isomerase, found in Streptococcus pyogenes serotype M2 (strain MGAS10270).